Here is a 480-residue protein sequence, read N- to C-terminus: 2-phosphoxylose phosphatase 1 (480 aa).

At 1-6 (MLYRNR) the chain is on the cytoplasmic side. A helical; Signal-anchor for type II membrane protein transmembrane segment spans residues 7–27 (FLVLLALAGLLAFLSLSLQFF). The Lumenal segment spans residues 28 to 480 (HLIPVSTTKN…YYDACHGEGA (453 aa)). His97 (nucleophile) is an active-site residue. N-linked (GlcNAc...) asparagine glycosylation is found at Asn194, Asn305, and Asn354. The active-site Proton donor is Asp379.

Belongs to the histidine acid phosphatase family. As to quaternary structure, interacts with B3GAT3; the interaction increases the 2-phosphoxylose phosphatase activity of PXYLP1 during completion of linkage region formation in a B3GAT3-mediated manner.

The protein localises to the golgi apparatus membrane. It catalyses the reaction 3-O-[beta-D-GlcA-(1-&gt;3)-beta-D-Gal-(1-&gt;3)-beta-D-Gal-(1-&gt;4)-beta-D-2-O-P-Xyl]-L-seryl-[protein] + H2O = 3-O-(beta-D-GlcA-(1-&gt;3)-beta-D-Gal-(1-&gt;3)-beta-D-Gal-(1-&gt;4)-beta-D-Xyl)-L-seryl-[protein] + phosphate. In terms of biological role, responsible for the 2-O-dephosphorylation of xylose in the glycosaminoglycan-protein linkage region of proteoglycans thereby regulating the amount of mature glycosaminoglycan (GAG) chains. Sulfated glycosaminoglycans (GAGs), including heparan sulfate and chondroitin sulfate, are synthesized on the so-called common GAG-protein linkage region (GlcUAbeta1-3Galbeta1-3Galbeta1-4Xylbeta1-O-Ser) of core proteins, which is formed by the stepwise addition of monosaccharide residues by the respective specific glycosyltransferases. Xylose 2-O-dephosphorylation during completion of linkage region formation is a prerequisite for the initiation and efficient elongation of the repeating disaccharide region of GAG chains. This Rattus norvegicus (Rat) protein is 2-phosphoxylose phosphatase 1.